The primary structure comprises 195 residues: PE-PGRS family protein PE_PGRS61 (195 aa).

It belongs to the mycobacterial PE family. PGRS subfamily. In terms of assembly, interacts with human TLR2.

It is found in the secreted. Its subcellular location is the cell wall. The protein resides in the cell surface. Its activity is regulated as follows. Binding of Ca(2+) to PE_PGRS61 induces conformational changes and increases affinity for TLR2. Mediates Ca(2+)-dependent up-regulation of the anti-inflammatory cytokine IL-10. This Mycobacterium tuberculosis (strain ATCC 25618 / H37Rv) protein is PE-PGRS family protein PE_PGRS61.